Reading from the N-terminus, the 723-residue chain is Probable alpha-fucosidase A (723 aa).

The first 15 residues, 1–15 (MRSLVLLGMSSLATA), serve as a signal peptide directing secretion. N-linked (GlcNAc...) asparagine glycans are attached at residues asparagine 77, asparagine 98, asparagine 117, asparagine 171, asparagine 194, asparagine 243, asparagine 334, asparagine 558, asparagine 566, and asparagine 595.

Belongs to the glycosyl hydrolase 95 family.

It localises to the secreted. The enzyme catalyses an alpha-L-fucoside + H2O = L-fucose + an alcohol. Its function is as follows. Alpha-fucosidase involved in degradation of fucosylated xyloglucans. Hydrolyzes alpha-1,2-linked fucose. In Aspergillus oryzae (strain ATCC 42149 / RIB 40) (Yellow koji mold), this protein is Probable alpha-fucosidase A (afcA).